We begin with the raw amino-acid sequence, 341 residues long: Anthranilate phosphoribosyltransferase (341 aa).

5-phospho-alpha-D-ribose 1-diphosphate is bound by residues Gly80, 83-84 (GD), Thr88, 90-93 (NIST), 108-116 (KHGNRAMSS), and Ser120. Residue Gly80 participates in anthranilate binding. Ser92 is a binding site for Mg(2+). Asn111 serves as a coordination point for anthranilate. An anthranilate-binding site is contributed by Arg166. Residues Asp225 and Glu226 each coordinate Mg(2+).

The protein belongs to the anthranilate phosphoribosyltransferase family. Homodimer. Mg(2+) serves as cofactor.

It catalyses the reaction N-(5-phospho-beta-D-ribosyl)anthranilate + diphosphate = 5-phospho-alpha-D-ribose 1-diphosphate + anthranilate. It functions in the pathway amino-acid biosynthesis; L-tryptophan biosynthesis; L-tryptophan from chorismate: step 2/5. In terms of biological role, catalyzes the transfer of the phosphoribosyl group of 5-phosphorylribose-1-pyrophosphate (PRPP) to anthranilate to yield N-(5'-phosphoribosyl)-anthranilate (PRA). This chain is Anthranilate phosphoribosyltransferase, found in Roseiflexus sp. (strain RS-1).